Reading from the N-terminus, the 338-residue chain is Glycerol-3-phosphate dehydrogenase [NAD(P)+] (338 aa).

The NADPH site is built by S13, W14, and K108. Residues K108, G139, and S141 each contribute to the sn-glycerol 3-phosphate site. A143 contributes to the NADPH binding site. Residues K194, D247, S257, R258, and N259 each contribute to the sn-glycerol 3-phosphate site. K194 (proton acceptor) is an active-site residue. R258 contributes to the NADPH binding site. 2 residues coordinate NADPH: V282 and E284.

It belongs to the NAD-dependent glycerol-3-phosphate dehydrogenase family.

It localises to the cytoplasm. It catalyses the reaction sn-glycerol 3-phosphate + NAD(+) = dihydroxyacetone phosphate + NADH + H(+). The enzyme catalyses sn-glycerol 3-phosphate + NADP(+) = dihydroxyacetone phosphate + NADPH + H(+). It functions in the pathway membrane lipid metabolism; glycerophospholipid metabolism. Catalyzes the reduction of the glycolytic intermediate dihydroxyacetone phosphate (DHAP) to sn-glycerol 3-phosphate (G3P), the key precursor for phospholipid synthesis. In Streptococcus pyogenes serotype M12 (strain MGAS9429), this protein is Glycerol-3-phosphate dehydrogenase [NAD(P)+].